Reading from the N-terminus, the 742-residue chain is Glycine--tRNA ligase (742 aa).

The 57-residue stretch at Lys73–Phe129 folds into the WHEP-TRS domain. Glycine is bound at residue Glu309. ATP-binding positions include Arg341 to Glu343 and Arg352 to Val353. Residue Glu360 participates in glycine binding. An ATP-binding site is contributed by Glu467–Cys468. Residue Glu586 to Ser588 coordinates glycine. Residue Arg593 participates in ATP binding.

The protein belongs to the class-II aminoacyl-tRNA synthetase family. Homodimer.

The protein resides in the cytoplasm. The protein localises to the cell projection. It is found in the axon. It localises to the secreted. Its subcellular location is the extracellular exosome. The catalysed reaction is tRNA(Gly) + glycine + ATP = glycyl-tRNA(Gly) + AMP + diphosphate. It catalyses the reaction 2 ATP + H(+) = P(1),P(4)-bis(5'-adenosyl) tetraphosphate + diphosphate. Its function is as follows. Catalyzes the ATP-dependent ligation of glycine to the 3'-end of its cognate tRNA, via the formation of an aminoacyl-adenylate intermediate (Gly-AMP). Also produces diadenosine tetraphosphate (Ap4A), a universal pleiotropic signaling molecule needed for cell regulation pathways, by direct condensation of 2 ATPs. Thereby, may play a special role in Ap4A homeostasis. The protein is Glycine--tRNA ligase of Caenorhabditis elegans.